The following is a 174-amino-acid chain: Interleukin-10 (174 aa).

The first 16 residues, 1 to 16, serve as a signal peptide directing secretion; sequence MPTWMLLFCLLCVTSS. N17 carries N-linked (GlcNAc...) asparagine glycosylation. 2 cysteine pairs are disulfide-bonded: C26–C122 and C76–C128.

Belongs to the IL-10 family. In terms of assembly, homodimer. Interacts with IL10RA and IL10RB.

It localises to the secreted. In terms of biological role, major immune regulatory cytokine that acts on many cells of the immune system where it has profound anti-inflammatory functions, limiting excessive tissue disruption caused by inflammation. Mechanistically, IL10 binds to its heterotetrameric receptor comprising IL10RA and IL10RB leading to JAK1 and STAT2-mediated phosphorylation of STAT3. In turn, STAT3 translocates to the nucleus where it drives expression of anti-inflammatory mediators. Targets antigen-presenting cells (APCs) such as macrophages and monocytes and inhibits their release of pro-inflammatory cytokines including granulocyte-macrophage colony-stimulating factor /GM-CSF, granulocyte colony-stimulating factor/G-CSF, IL-1 alpha, IL-1 beta, IL-6, IL-8 and TNF-alpha. Also interferes with antigen presentation by reducing the expression of MHC-class II and co-stimulatory molecules, thereby inhibiting their ability to induce T cell activation. In addition, controls the inflammatory response of macrophages by reprogramming essential metabolic pathways including mTOR signaling. In Trichosurus vulpecula (Brush-tailed possum), this protein is Interleukin-10 (IL10).